Here is a 417-residue protein sequence, read N- to C-terminus: UDP-N-acetylglucosamine 1-carboxyvinyltransferase (417 aa).

23–24 (KN) is a binding site for phosphoenolpyruvate. Residue Arg-93 coordinates UDP-N-acetyl-alpha-D-glucosamine. The active-site Proton donor is Asp-117. Residues Asp-305 and Val-327 each coordinate UDP-N-acetyl-alpha-D-glucosamine.

This sequence belongs to the EPSP synthase family. MurA subfamily.

The protein localises to the cytoplasm. It catalyses the reaction phosphoenolpyruvate + UDP-N-acetyl-alpha-D-glucosamine = UDP-N-acetyl-3-O-(1-carboxyvinyl)-alpha-D-glucosamine + phosphate. It functions in the pathway cell wall biogenesis; peptidoglycan biosynthesis. In terms of biological role, cell wall formation. Adds enolpyruvyl to UDP-N-acetylglucosamine. This chain is UDP-N-acetylglucosamine 1-carboxyvinyltransferase, found in Mycolicibacterium paratuberculosis (strain ATCC BAA-968 / K-10) (Mycobacterium paratuberculosis).